The sequence spans 589 residues: Monocopper oxidase-like protein SKS1 (589 aa).

The signal sequence occupies residues 1 to 24 (MAATCSLLASFLLCFALLSAVSFA). 10 N-linked (GlcNAc...) asparagine glycosylation sites follow: N62, N111, N204, N243, N260, N296, N345, N365, N433, and N447. Residues 322 to 356 (LPVPKTDVSSPWSAMSQPKTIRQNTSASGARPNPQ) are disordered. The segment covering 328 to 349 (DVSSPWSAMSQPKTIRQNTSAS) has biased composition (polar residues). H455 contributes to the Cu cation binding site. The GPI-anchor amidated serine moiety is linked to residue S563. Positions 564–589 (AATSILNGHLKLMLLMVLLASVFRFC) are cleaved as a propeptide — removed in mature form.

This sequence belongs to the multicopper oxidase family. Requires Cu cation as cofactor.

It localises to the cell membrane. In Arabidopsis thaliana (Mouse-ear cress), this protein is Monocopper oxidase-like protein SKS1 (SKS1).